The following is a 609-amino-acid chain: Pentatricopeptide repeat-containing protein At1g03540 (609 aa).

PPR repeat units follow at residues 25–59, 60–94, 95–126, 127–161, 162–196, 197–227, 228–263, 264–298, 299–329, 330–364, 396–426, 427–461, 462–497, and 498–532; these read SAPTKQSRILELCKLGQLTEAIRILNSTHSSEIPA, TPKLYASLLQTCNKVFSFIHGIQFHAHVVKSGLET, DRNVGNSLLSLYFKLGPGMRETRRVFDGRFVK, DAISWTSMMSGYVTGKEHVKALEVFVEMVSFGLDA, NEFTLSSAVKACSELGEVRLGRCFHGVVITHGFEW, NHFISSTLAYLYGVNREPVDARRVFDEMPEP, DVICWTAVLSAFSKNDLYEEALGLFYAMHRGKGLVP, DGSTFGTVLTACGNLRRLKQGKEIHGKLITNGIGS, NVVVESSLLDMYGKCGSVREARQVFNGMSKK, NSVSWSALLGGYCQNGEHEKAIEIFREMEEKDLYC, NVIVESALIDLYGKSGCIDSASRVYSKMSIR, NMITWNAMLSALAQNGRGEEAVSFFNDMVKKGIKP, DYISFIAILTACGHTGMVDEGRNYFVLMAKSYGIKP, and GTEHYSCMIDLLGRAGLFEEAENLLERAECRNDAS. Positions 533-609 are type E motif; the sequence is LWGVLLGPCA…TVGQSWIDAH (77 aa).

Belongs to the PPR family. PCMP-E subfamily.

This chain is Pentatricopeptide repeat-containing protein At1g03540 (PCMP-E4), found in Arabidopsis thaliana (Mouse-ear cress).